The sequence spans 366 residues: MTPEHLPTEQYEAQLAEKVVRLQSMMAPFSDLVPEVFRSPVSHYRMRAEFRIWHDGDDLYHIIFDQQTKSRIRVDSFPAASELINQLMTAMIAGVRNNPVLRHKLFQIDYLTTLSNQAVVSLLYHKKLDDEWRQEAEALRDALRAQNLNVHLIGRATKTKIELDQDYIDERLPVAGKEMIYRQVENSFTQPNAAMNIQMLEWALDVTKGSKGDLLELYCGNGNFSLALARNFDRVLATEIAKPSVAAAQYNIAANHIDNVQIIRMAAEEFTQAMNGVREFNRLQGIDLKSYQCETIFVDPPRSGLDSETEKMVQAYPRILYISCNPETLCKNLETLSQTHKVERLALFDQFPYTHHMECGVLLTAK.

S-adenosyl-L-methionine is bound by residues glutamine 190, tyrosine 218, asparagine 223, glutamate 239, and aspartate 299. The Nucleophile role is filled by cysteine 324. The active-site Proton acceptor is glutamate 358.

It belongs to the class I-like SAM-binding methyltransferase superfamily. RNA M5U methyltransferase family. TrmA subfamily.

It catalyses the reaction uridine(54) in tRNA + S-adenosyl-L-methionine = 5-methyluridine(54) in tRNA + S-adenosyl-L-homocysteine + H(+). It carries out the reaction uridine(341) in tmRNA + S-adenosyl-L-methionine = 5-methyluridine(341) in tmRNA + S-adenosyl-L-homocysteine + H(+). In terms of biological role, dual-specificity methyltransferase that catalyzes the formation of 5-methyluridine at position 54 (m5U54) in all tRNAs, and that of position 341 (m5U341) in tmRNA (transfer-mRNA). This Escherichia coli (strain ATCC 8739 / DSM 1576 / NBRC 3972 / NCIMB 8545 / WDCM 00012 / Crooks) protein is tRNA/tmRNA (uracil-C(5))-methyltransferase.